Reading from the N-terminus, the 750-residue chain is von Willebrand factor A domain-containing protein DDB_G0292188 (750 aa).

The VWFA domain maps to 17–249; that stretch reads EIKTVFNSDS…IKDDLLLDVV (233 aa). 2 stretches are compositionally biased toward low complexity: residues 586–595 and 603–645; these read SINDNNNSFN and PFFE…SSAS. The segment at 586–657 is disordered; it reads SINDNNNSFN…PPPSQMLNEQ (72 aa).

The protein is von Willebrand factor A domain-containing protein DDB_G0292188 of Dictyostelium discoideum (Social amoeba).